A 526-amino-acid polypeptide reads, in one-letter code: GMP synthase [glutamine-hydrolyzing] (526 aa).

The Glutamine amidotransferase type-1 domain maps to 4-202 (KILILDFGSQ…VHDICGCDQS (199 aa)). Catalysis depends on Cys81, which acts as the Nucleophile. Active-site residues include His176 and Glu178. A GMPS ATP-PPase domain is found at 203 to 395 (WNMPDYVETA…LGLPHDMVYR (193 aa)). 230–236 (SGGVDSS) provides a ligand contact to ATP.

In terms of assembly, homodimer.

It catalyses the reaction XMP + L-glutamine + ATP + H2O = GMP + L-glutamate + AMP + diphosphate + 2 H(+). The protein operates within purine metabolism; GMP biosynthesis; GMP from XMP (L-Gln route): step 1/1. Functionally, catalyzes the synthesis of GMP from XMP. This Methylobacillus flagellatus (strain ATCC 51484 / DSM 6875 / VKM B-1610 / KT) protein is GMP synthase [glutamine-hydrolyzing].